The sequence spans 420 residues: FAD-dependent monooxygenase ntnJ (420 aa).

Residues 12–31 (FRVIVVGAGIGGLSAAVALA) traverse the membrane as a helical segment. Residues Glu41 and Ala54 each coordinate FAD. N-linked (GlcNAc...) asparagine glycosylation occurs at Asn124. The active site involves Arg187. A glycan (N-linked (GlcNAc...) asparagine) is linked at Asn264. 2 residues coordinate FAD: Asp302 and Val315.

Belongs to the paxM FAD-dependent monooxygenase family. It depends on FAD as a cofactor.

The protein localises to the membrane. It functions in the pathway secondary metabolite biosynthesis; terpenoid biosynthesis. Functionally, FAD-dependent monooxygenase; part of the gene cluster that mediates the biosynthesis of the meroterpenoids nectripenoids A and B, as well as cochliquninone D and isocochliquninone E. The pathway probably begins with the HR-PKS ntnH that catalyzes two chain-extension steps to form a reduced triketide, which then primes the SAT domain in the NR-PKS ntnG to initiate three more cycles of extension to give a linear hexaketide corresponding to the polyketide part of nectripenoids. The FAD-dependent monooxygenase ntnJ then performs an oxidative decarboxylation at C11 of the ntnH/ntnG product, via an electrophilic aromatic hydroxylation with concomitant ipso-decarboxylation. The membrane-bound polyprenyl transferase ntnF then introduces a farnesyl group before the FAD-dependent monooxygenase ntnK functions as the first epoxidase on terminal C12'-C13' olefin, followed by a second epoxidation on C7'-C8' catalyzed by ntnA. The terpene cyclase/mutase ntnI then initiates the sequential tricyclic ring formation through protonation of the terminal epoxide and catalyzes the regioselective and stereoselective 6/6/6-tricyclic ring formation. The cytochrome P450 monooxygenase ntnM may then hydroxylate C1'. The polypeptide is FAD-dependent monooxygenase ntnJ (Nectria sp).